The following is a 101-amino-acid chain: Apolipoprotein C-II (101 aa).

The signal sequence occupies residues 1–22 (MGTRYFLVGFLILLVLGFEVQG). Residues 66–74 (AVDEKIRDI) form a lipid binding region. The segment at 78-101 (STAAVTTYAGIITDQVFSVLSGKD) is lipoprotein lipase cofactor.

This sequence belongs to the apolipoprotein C2 family. In terms of processing, proapolipoprotein C-II is synthesized as a sialic acid containing glycoprotein which is subsequently desialylated prior to its proteolytic processing. Post-translationally, proapolipoprotein C-II undergoes proteolytic cleavage of its N-terminal hexapeptide to generate apolipoprotein C-II. In bovine, proapolipoprotein C-II was found to be the minor form whereas apolipoprotein C-II was found to be the major form in plasma.

The protein localises to the secreted. Functionally, component of chylomicrons, very low-density lipoproteins (VLDL), low-density lipoproteins (LDL), and high-density lipoproteins (HDL) in plasma. Plays an important role in lipoprotein metabolism as an activator of lipoprotein lipase. Both proapolipoprotein C-II and apolipoprotein C-II can activate lipoprotein lipase. The chain is Apolipoprotein C-II (APOC2) from Bos taurus (Bovine).